Consider the following 176-residue polypeptide: RNA pyrophosphohydrolase (176 aa).

Residues 6-149 (GYRPNVGIVI…KRDVYRRVMK (144 aa)) enclose the Nudix hydrolase domain. The Nudix box motif lies at 38–59 (GGINPGESAEQAMYRELFEEVG).

The protein belongs to the Nudix hydrolase family. RppH subfamily. The cofactor is a divalent metal cation.

In terms of biological role, accelerates the degradation of transcripts by removing pyrophosphate from the 5'-end of triphosphorylated RNA, leading to a more labile monophosphorylated state that can stimulate subsequent ribonuclease cleavage. This Shigella boydii serotype 4 (strain Sb227) protein is RNA pyrophosphohydrolase.